The sequence spans 621 residues: SH2B adapter protein 2 (621 aa).

Residue tyrosine 47 is modified to Phosphotyrosine. Serine 130 is modified (phosphoserine). The segment at 143-166 (RRSSPEPDGGATPKAAEPASEPRD) is disordered. The PH domain occupies 186 to 299 (DIQREGALRF…WVADIQGCVD (114 aa)). Residue serine 303 is modified to Phosphoserine. The region spanning 409–507 (WFHGTLSRVK…SADITLRSYV (99 aa)) is the SH2 domain. 2 disordered regions span residues 507-528 (VRAQ…PVPA) and 549-611 (PASP…LGRA). Positions 552 to 571 (PSNGAGASSSSGSSSSATSL) are enriched in low complexity. Phosphoserine is present on serine 597. Residue tyrosine 618 is modified to Phosphotyrosine.

Belongs to the SH2B adapter family. Homodimer. Interacts with KIT/c-KIT, SHC1, EPOR, PDGFR, VAV1 and VAV3. Interacts (via N-terminal region) with SHC1. Interacts (via the phosphorylated C-terminus) with GRB2. Interacts (via its SH2 domain) with EPOR, INSR and KIT. Interacts with GRB2 after B-cell antigen receptor stimulation. Interacts (via PH domain) with VAV3. Interacts with NTRK1, NTRK2 and NTRK3 (phosphorylated); after stimulation of the receptor by its extracellular ligand and subsequent autophosphorylation of the receptor. Binds INSR, GRB2, ASB6 and CAP. Insulin stimulation leads to dissociation of CAP. Binds CBS only when SH2B2/APS has become phosphorylated. INSR binding does not depend on the phosphorylation of SH2B2/APS. Tyrosine phosphorylated by JAK2, KIT and other kinases activated by B-cell receptor in response to stimulation with cytokines, IL3, IL5, PDGF, IGF1, IGF2, CSF2/GM-CSF and cross-linking of the B-cell receptor complex. As to expression, strongly expressed in brain; also expressed in spleen, kidney and skeletal muscle, and at low levels in small intestine and bone marrow. Strongly expressed in B-cell lines, but not T-cell lines. Also expressed in myeloid and fibroblast cell lines.

Its subcellular location is the cytoplasm. It is found in the cell membrane. In terms of biological role, adapter protein for several members of the tyrosine kinase receptor family. Involved in multiple signaling pathways. May be involved in coupling from immunoreceptor to Ras signaling. Acts as a negative regulator of cytokine signaling in collaboration with CBL. Binds to EPOR and suppresses EPO-induced STAT5 activation, possibly through a masking effect on STAT5 docking sites in EPOR. Suppresses PDGF-induced mitogenesis. May induce cytoskeletal reorganization via interaction with VAV3. The protein is SH2B adapter protein 2 (Sh2b2) of Mus musculus (Mouse).